A 131-amino-acid chain; its full sequence is Glycine cleavage system H protein (131 aa).

The region spanning 24 to 106 (RAIVGVSDHA…YGEGWIMVIE (83 aa)) is the Lipoyl-binding domain. Residue K65 is modified to N6-lipoyllysine.

This sequence belongs to the GcvH family. As to quaternary structure, the glycine cleavage system is composed of four proteins: P, T, L and H. Requires (R)-lipoate as cofactor.

Its function is as follows. The glycine cleavage system catalyzes the degradation of glycine. The H protein shuttles the methylamine group of glycine from the P protein to the T protein. In Xylella fastidiosa (strain Temecula1 / ATCC 700964), this protein is Glycine cleavage system H protein.